The sequence spans 467 residues: Iroquois-class homeodomain protein irx-1-A (467 aa).

Positions 126–188 (DPGRPKNATR…NARRRLKKEN (63 aa)) form a DNA-binding region, homeobox; TALE-type. Disordered regions lie at residues 197–306 (KEDD…PPHS), 318–344 (TSPDGALKSSPPPSQGNHTSPPIQHPA), and 410–467 (SLSS…LPSA). Acidic residues-rich tracts occupy residues 215–225 (EDDEEIDLESI) and 233–244 (NDGEQSNEEEDE). The span at 245–262 (KLEHLRQGEKESLKKESE) shows a compositional bias: basic and acidic residues. Basic and acidic residues predominate over residues 415-431 (KTPERTSPKHSDRENVP). Positions 447–460 (RENTLSQQEGTSRI) are enriched in polar residues.

It belongs to the TALE/IRO homeobox family. In terms of tissue distribution, expressed early in neural differentiation in the neural plate, and expression continues in the neural tube after neural fold closure. Expressed in the presumptive midbrain territory. Also expressed in the prospective neural crest and the preplacodal field, anterior to the neural plate. Strongly expressed in the profundal placode and weakly expressed in the trigeminal placode. Also expressed in the mesoderm in the Spemann organizer from the start of gastrulation, and subsequently in its derivatives; namely in the notochord as well as in the somites of stage 25 embryos, and the somites and notochord of tailbud embryos. Also expressed in specific and overlapping dynamic patterns with irx2 and irx3 during pronephric kidney development. Renal expression begins in the dorsal region of the pronephric anlage at mid neurula stage and continues to at least tailbud stages where expression is confined to the intermediate tubule segment IT1. Renal expression is maintained at tadpole stages.

It localises to the nucleus. Acts partially redundantly with other irx members in neural patterning. Required for formation of the posterior forebrain, midbrain, hindbrain, and to a lesser extent, spinal cord. Acts early in neural plate development to induce expression of some but not all proneural genes, and specify a neural precursor state. Also up-regulates repressors that prevent neuronal differentiation. Patterns the neuroectoderm in both the anterior/posterior and dorsal/ventral axes. Acts primarily as a transcriptional repressor during neural development, and binds to the bmp4 promoter to repress gene expression and thus mediate down-regulation of bmp4 by wnt signaling. Controls multiple processes through bmp4-repression including neural plate development, neural crest specification and Spemann organizer development. Involved in the specification of the preplacodal field at the anterior border of the neural plate. Regulates the genetic cascade of interactions that are necessary for positioning the isthmus organizer and the formation of the midbrain-hindbrain boundary. Required during at least two stages of pronephros kidney development; during neurula stages, maintains transcription of key renal genes to define the size and identity of the pronephric anlage, probably in part through regulation of bmp-signaling. Subsequently required for proper formation of the intermediate tubule segment of the pronephros. Acts principally as a transcriptional activator during pronephros development. The polypeptide is Iroquois-class homeodomain protein irx-1-A (irx1-a) (Xenopus laevis (African clawed frog)).